We begin with the raw amino-acid sequence, 145 residues long: 3-hydroxyacyl-[acyl-carrier-protein] dehydratase FabZ (145 aa).

The active site involves histidine 48.

This sequence belongs to the thioester dehydratase family. FabZ subfamily.

Its subcellular location is the cytoplasm. The catalysed reaction is a (3R)-hydroxyacyl-[ACP] = a (2E)-enoyl-[ACP] + H2O. Involved in unsaturated fatty acids biosynthesis. Catalyzes the dehydration of short chain beta-hydroxyacyl-ACPs and long chain saturated and unsaturated beta-hydroxyacyl-ACPs. This Cellvibrio japonicus (strain Ueda107) (Pseudomonas fluorescens subsp. cellulosa) protein is 3-hydroxyacyl-[acyl-carrier-protein] dehydratase FabZ.